The following is a 434-amino-acid chain: Serine hydroxymethyltransferase (434 aa).

(6S)-5,6,7,8-tetrahydrofolate contacts are provided by residues Leu128 and 132 to 134 (GHL). At Lys237 the chain carries N6-(pyridoxal phosphate)lysine.

It belongs to the SHMT family. As to quaternary structure, homodimer. Pyridoxal 5'-phosphate serves as cofactor.

Its subcellular location is the cytoplasm. The enzyme catalyses (6R)-5,10-methylene-5,6,7,8-tetrahydrofolate + glycine + H2O = (6S)-5,6,7,8-tetrahydrofolate + L-serine. It participates in one-carbon metabolism; tetrahydrofolate interconversion. It functions in the pathway amino-acid biosynthesis; glycine biosynthesis; glycine from L-serine: step 1/1. Functionally, catalyzes the reversible interconversion of serine and glycine with tetrahydrofolate (THF) serving as the one-carbon carrier. This reaction serves as the major source of one-carbon groups required for the biosynthesis of purines, thymidylate, methionine, and other important biomolecules. Also exhibits THF-independent aldolase activity toward beta-hydroxyamino acids, producing glycine and aldehydes, via a retro-aldol mechanism. This Corynebacterium glutamicum (strain R) protein is Serine hydroxymethyltransferase.